We begin with the raw amino-acid sequence, 174 residues long: Disulfide bond formation protein B (174 aa).

Topologically, residues 1-12 (MLNWIDTAPRRI) are cytoplasmic. The helical transmembrane segment at 13 to 29 (LALISAACVAMLAFGMY) threads the bilayer. Residues 30-47 (LQHVVGLEPCPMCIVQRY) lie on the Periplasmic side of the membrane. A disulfide bond links Cys39 and Cys42. The chain crosses the membrane as a helical span at residues 48 to 64 (ALIGVAVFAGLASARGQ). The Cytoplasmic segment spans residues 65–69 (KGWWM). Residues 70-87 (TWSVLALVAAGFGAFVAA) form a helical membrane-spanning segment. Over 88 to 143 (RQSWLQWYPPEIATCGRDFYGMIENYPISRAIPMIFRGSGDCTAVDWTFLGGSIAN) the chain is Periplasmic. The cysteines at positions 102 and 129 are disulfide-linked. The chain crosses the membrane as a helical span at residues 144 to 162 (WSFVWFLLFAVLLLVLLVR). The Cytoplasmic portion of the chain corresponds to 163-174 (GGRGAPDTLARA).

This sequence belongs to the DsbB family.

The protein localises to the cell inner membrane. In terms of biological role, required for disulfide bond formation in some periplasmic proteins. Acts by oxidizing the DsbA protein. The sequence is that of Disulfide bond formation protein B from Acidovorax sp. (strain JS42).